The following is a 186-amino-acid chain: MMELQDHFLIAMPQMEDDYFAHSVVYICEHNDQGTMGLVLNQPTDLSIAELCAKMNFMMKTDRTYGNDLVLAGGPVNIERGFILHTKTAQTFKHSYKVTDQLSLTTSADIIDTFGTAQAPEKYLVALGCASWTVNQLESEIANNDWLVVPANNRILFDVPYEDRWLEANLLLGIQHHNFAHQAGHC.

The protein belongs to the UPF0301 (AlgH) family.

The polypeptide is UPF0301 protein PM1869 (Pasteurella multocida (strain Pm70)).